The sequence spans 126 residues: Large ribosomal subunit protein bL12 (126 aa).

This sequence belongs to the bacterial ribosomal protein bL12 family. Homodimer. Part of the ribosomal stalk of the 50S ribosomal subunit. Forms a multimeric L10(L12)X complex, where L10 forms an elongated spine to which 2 to 4 L12 dimers bind in a sequential fashion. Binds GTP-bound translation factors.

Forms part of the ribosomal stalk which helps the ribosome interact with GTP-bound translation factors. Is thus essential for accurate translation. This is Large ribosomal subunit protein bL12 from Bifidobacterium longum (strain DJO10A).